Reading from the N-terminus, the 538-residue chain is [Pyruvate dehydrogenase [acetyl-transferring]]-phosphatase 1, mitochondrial (538 aa).

The transit peptide at 1–71 directs the protein to the mitochondrion; it reads MPAPTQLFFP…WWQYTQGRRY (71 aa). In terms of domain architecture, PPM-type phosphatase spans 109–525; that stretch reads ILGFDSNQLP…DDITIIVVQF (417 aa). Mn(2+) is bound by residues aspartate 144 and glycine 145. Residue lysine 202 is modified to N6-acetyllysine. Residues aspartate 418 and aspartate 516 each contribute to the Mn(2+) site.

Belongs to the PP2C family. In terms of assembly, heterodimer of a catalytic (PDP1) and a regulatory (PDPR) subunit. Mn(2+) serves as cofactor. The cofactor is Mg(2+).

It is found in the mitochondrion. The enzyme catalyses O-phospho-L-seryl-[pyruvate dehydrogenase E1 alpha subunit] + H2O = L-seryl-[pyruvate dehydrogenase E1 alpha subunit] + phosphate. With respect to regulation, magnesium-dependent and calcium-stimulated. PDP1 activity strongly depends on its Ca(2+)-dependent binding to the lipoyl domain of E2 subunit of component of the pyruvate dehydrogenase complex. Mitochondrial enzyme that catalyzes the dephosphorylation and concomitant reactivation of the alpha subunit of the E1 component of the pyruvate dehydrogenase complex (PDC), thereby stimulating the conversion of pyruvate into acetyl-CoA. In Mus musculus (Mouse), this protein is [Pyruvate dehydrogenase [acetyl-transferring]]-phosphatase 1, mitochondrial (Pdp1).